The following is a 486-amino-acid chain: Ribulose bisphosphate carboxylase large chain 3 (486 aa).

Substrate contacts are provided by Asn-125 and Thr-175. The active-site Proton acceptor is Lys-177. Lys-179 serves as a coordination point for substrate. 3 residues coordinate Mg(2+): Lys-203, Asp-205, and Glu-206. The residue at position 203 (Lys-203) is an N6-carboxylysine. The active-site Proton acceptor is the His-295. Positions 296, 328, and 380 each coordinate substrate.

It belongs to the RuBisCO large chain family. Type I subfamily. As to quaternary structure, heterohexadecamer of 8 large chains and 8 small chains. Mg(2+) serves as cofactor.

It carries out the reaction 2 (2R)-3-phosphoglycerate + 2 H(+) = D-ribulose 1,5-bisphosphate + CO2 + H2O. It catalyses the reaction D-ribulose 1,5-bisphosphate + O2 = 2-phosphoglycolate + (2R)-3-phosphoglycerate + 2 H(+). Its function is as follows. RuBisCO catalyzes two reactions: the carboxylation of D-ribulose 1,5-bisphosphate, the primary event in carbon dioxide fixation, as well as the oxidative fragmentation of the pentose substrate. Both reactions occur simultaneously and in competition at the same active site. The sequence is that of Ribulose bisphosphate carboxylase large chain 3 from Bradyrhizobium sp. (strain BTAi1 / ATCC BAA-1182).